A 242-amino-acid chain; its full sequence is Probable transcriptional regulatory protein PG_0097 (242 aa).

This sequence belongs to the TACO1 family.

It localises to the cytoplasm. This Porphyromonas gingivalis (strain ATCC BAA-308 / W83) protein is Probable transcriptional regulatory protein PG_0097.